Reading from the N-terminus, the 724-residue chain is Probable ATP-dependent RNA helicase DDX4 (724 aa).

A disordered region spans residues 1 to 246 (MGDEDWEAEI…SDTQGPKVTY (246 aa)). The span at 30–42 (NGDNFNRTPASSS) shows a compositional bias: polar residues. Residues 69-78 (DAGECNKRDN) show a composition bias toward basic and acidic residues. Positions 150-162 (RGSFRGCRGGFGL) are enriched in gly residues. Over residues 195–205 (GDTSQSRSGSG) the composition is skewed to low complexity. A phosphoserine mark is found at Ser222 and Ser226. An interaction with RANBP9 region spans residues 228–247 (KSEAEGGESSDTQGPKVTYI). The short motif at 288–316 (LTFEEANLCQTLNNNIAKAGYTKLTPVQK) is the Q motif element. The 184-residue stretch at 319 to 502 (IPIILAGRDL…AEFLKSNYLF (184 aa)) folds into the Helicase ATP-binding domain. 332–339 (AQTGSGKT) serves as a coordination point for ATP. The DEAD box signature appears at 446–449 (DEAD). The 146-residue stretch at 530–675 (KLVEILRNIG…DVPAWLEEIA (146 aa)) folds into the Helicase C-terminal domain. Residues 704–715 (LNTAGFSSSQAP) are compositionally biased toward polar residues. Residues 704–724 (LNTAGFSSSQAPNPVDDESWD) form a disordered region. A Phosphoserine modification is found at Ser722.

The protein belongs to the DEAD box helicase family. DDX4/VASA subfamily. As to quaternary structure, found in a mRNP complex, at least composed of TDRD1, TDRD6, TDRD7 and DDX4. Interacts with RANBP9. Interacts with RANBP10. Interacts with PIWIL2 and MAEL. Interacts with BMAL1 and CLOCK. Interacts with Tex19.1 and, probably, Tex19.2. Interacts with RBM46. In terms of tissue distribution, expressed only in ovary and testis. Expressed in migratory primordial germ cells in the region of the gonadal ridge in both sexes.

The protein localises to the cytoplasm. The protein resides in the perinuclear region. The enzyme catalyses ATP + H2O = ADP + phosphate + H(+). ATP-dependent RNA helicase required during spermatogenesis. Required to repress transposable elements and preventing their mobilization, which is essential for the germline integrity. Acts via the piRNA metabolic process, which mediates the repression of transposable elements during meiosis by forming complexes composed of piRNAs and Piwi proteins and governs the methylation and subsequent repression of transposons. Involved in the secondary piRNAs metabolic process, the production of piRNAs in fetal male germ cells through a ping-pong amplification cycle. Required for PIWIL2 slicing-triggered piRNA biogenesis: helicase activity enables utilization of one of the slice cleavage fragments generated by PIWIL2 and processing these pre-piRNAs into piRNAs. The protein is Probable ATP-dependent RNA helicase DDX4 (DDX4) of Homo sapiens (Human).